A 128-amino-acid chain; its full sequence is Small ribosomal subunit protein uS12 (128 aa).

The tract at residues 1–25 is disordered; sequence MPTIQQLIRRGRKTKASKTASPALE. Asp89 is modified (3-methylthioaspartic acid). Positions 101-128 are disordered; it reads SLDTSGVADRRNSRSKYGAKRPKEAAAK.

It belongs to the universal ribosomal protein uS12 family. Part of the 30S ribosomal subunit. Contacts proteins S8 and S17. May interact with IF1 in the 30S initiation complex.

Its function is as follows. With S4 and S5 plays an important role in translational accuracy. In terms of biological role, interacts with and stabilizes bases of the 16S rRNA that are involved in tRNA selection in the A site and with the mRNA backbone. Located at the interface of the 30S and 50S subunits, it traverses the body of the 30S subunit contacting proteins on the other side and probably holding the rRNA structure together. The combined cluster of proteins S8, S12 and S17 appears to hold together the shoulder and platform of the 30S subunit. This Chlorobium phaeobacteroides (strain BS1) protein is Small ribosomal subunit protein uS12.